Consider the following 502-residue polypeptide: 4-hydroxy-3-methylbut-2-enyl diphosphate reductase, chloroplastic (502 aa).

The transit peptide at 1–48 (MQVLPQTRVQGVPSGRNLSCSKAVGGTPLRALTRDVVRPARSVNVHVV) directs the protein to the chloroplast. A [4Fe-4S] cluster-binding site is contributed by cysteine 140. Histidine 170 lines the (2E)-4-hydroxy-3-methylbut-2-enyl diphosphate pocket. Cysteine 232 is a binding site for [4Fe-4S] cluster. Position 260 (histidine 260) interacts with (2E)-4-hydroxy-3-methylbut-2-enyl diphosphate. Glutamate 262 serves as the catalytic Proton donor. Threonine 325 contributes to the (2E)-4-hydroxy-3-methylbut-2-enyl diphosphate binding site. Cysteine 363 contributes to the [4Fe-4S] cluster binding site. (2E)-4-hydroxy-3-methylbut-2-enyl diphosphate is bound by residues 398 to 400 (SSN) and serine 461.

It belongs to the IspH family. In terms of assembly, homodimer. [4Fe-4S] cluster is required as a cofactor.

The protein resides in the plastid. It localises to the chloroplast stroma. The catalysed reaction is dimethylallyl diphosphate + 2 oxidized [2Fe-2S]-[ferredoxin] + H2O = (2E)-4-hydroxy-3-methylbut-2-enyl diphosphate + 2 reduced [2Fe-2S]-[ferredoxin] + 2 H(+). It carries out the reaction isopentenyl diphosphate + 2 oxidized [2Fe-2S]-[ferredoxin] + H2O = (2E)-4-hydroxy-3-methylbut-2-enyl diphosphate + 2 reduced [2Fe-2S]-[ferredoxin] + 2 H(+). It participates in isoprenoid biosynthesis; dimethylallyl diphosphate biosynthesis; dimethylallyl diphosphate from (2E)-4-hydroxy-3-methylbutenyl diphosphate: step 1/1. It functions in the pathway isoprenoid biosynthesis; isopentenyl diphosphate biosynthesis via DXP pathway; isopentenyl diphosphate from 1-deoxy-D-xylulose 5-phosphate: step 6/6. Enzyme of the plastid non-mevalonate pathway for isoprenoid biosynthesis that converts 1-hydroxy-2-methyl-2-(E)-butenyl 4-diphosphate into isopentenyl diphosphate (IPP) and dimethylallyl diphosphate (DMAPP). The polypeptide is 4-hydroxy-3-methylbut-2-enyl diphosphate reductase, chloroplastic (Botryococcus braunii (Green alga)).